A 122-amino-acid polypeptide reads, in one-letter code: Basic phospholipase A2 F16 (122 aa).

7 disulfides stabilise this stretch: C26-C115, C28-C44, C43-C95, C49-C122, C50-C88, C57-C81, and C75-C86. Residues Y27, G29, and G31 each contribute to the Ca(2+) site. Residue H47 is part of the active site. Position 48 (D48) interacts with Ca(2+). The active site involves D89.

Belongs to the phospholipase A2 family. Group II subfamily. D49 sub-subfamily. Requires Ca(2+) as cofactor. Expressed by the venom gland.

It is found in the secreted. It catalyses the reaction a 1,2-diacyl-sn-glycero-3-phosphocholine + H2O = a 1-acyl-sn-glycero-3-phosphocholine + a fatty acid + H(+). Its activity is regulated as follows. Pre-incubation with heparin markedly reduces the neurotoxicity of this toxin. Functionally, snake venom phospholipase A2 (PLA2) that produces neuromuscular blockade in chick biventer cervicis preparations in the absence and presence of crotapotin. In contrast, in mouse phrenic nerve-diaphragm preparations, the neuromuscular blockade is dependent on crotapotin. PLA2 catalyzes the calcium-dependent hydrolysis of the 2-acyl groups in 3-sn-phosphoglycerides. The protein is Basic phospholipase A2 F16 of Crotalus durissus terrificus (South American rattlesnake).